A 414-amino-acid chain; its full sequence is uncharacterized protein (414 aa).

Residues 1–66 (MNPSVPKVMK…LQRISKDYLK (66 aa)) lie on the Lumenal side of the membrane. The tract at residues 20–51 (SKEMNDTSLQLPSTTRSLSPKESNSNEDFNVD) is disordered. Polar residues predominate over residues 25-51 (DTSLQLPSTTRSLSPKESNSNEDFNVD). Lys-40 participates in a covalent cross-link: Glycyl lysine isopeptide (Lys-Gly) (interchain with G-Cter in ubiquitin). A helical transmembrane segment spans residues 67–87 (PNIGLVLLTVSYFFNSAMVVS). The EamA 1 domain maps to 78–215 (YFFNSAMVVS…SLLGVVLIVR (138 aa)). The Cytoplasmic portion of the chain corresponds to 88-106 (TKVLENDPDDIANDRQIKP). The helical transmembrane segment at 107 to 127 (LQILLVRMVITYIGTLIYMYI) threads the bilayer. Residues 128 to 144 (NKSTISDVPFGKPEVRK) are Lumenal-facing. Residues 145–167 (WLVLRGCTGFFGVFGMYYSLMYL) form a helical membrane-spanning segment. The Cytoplasmic portion of the chain corresponds to 168–171 (TISD). A helical transmembrane segment spans residues 172 to 191 (AVLITFLAPSLTIFLSWVIL). Over 192-199 (RERFTKVE) the chain is Lumenal. Residues 200-220 (ALGSLISLLGVVLIVRPSFLF) traverse the membrane as a helical segment. At 221 to 241 (GTPELTDSSSQIVESSDPKSR) the chain is on the cytoplasmic side. The chain crosses the membrane as a helical span at residues 242-262 (LIATLVGLWGVLGMSCVYIII). The EamA 2 domain occupies 253 to 379 (LGMSCVYIII…IISATLWVIR (127 aa)). Residues 263–269 (RYIGKRA) are Lumenal-facing. Residues 270-290 (HAIMSVSYFSLITAIVSFIGI) traverse the membrane as a helical segment. Topologically, residues 291–307 (NTIPSMKFQIPHSKKQW) are cytoplasmic. Residues 308–328 (ILFGNLGVSGFIFQLLLTMGI) traverse the membrane as a helical segment. Residues 329 to 357 (QRERAGRGSLMTYTQLLYAVFWDVALYKH) lie on the Lumenal side of the membrane. The helical transmembrane segment at 358 to 378 (WPNIWSWIGMIIIISATLWVI) threads the bilayer. At 379-414 (RIRAANNETTAKDLTPIIDDEENSIPLTEFDLSDSK) the chain is on the cytoplasmic side.

The protein to yeast YPL264c.

It is found in the membrane. This is an uncharacterized protein from Saccharomyces cerevisiae (strain ATCC 204508 / S288c) (Baker's yeast).